A 1026-amino-acid polypeptide reads, in one-letter code: Multidrug resistance protein MdtC (1026 aa).

Helical transmembrane passes span 15–35 (ILIAAAITLCGILGFRLLPVA), 333–353 (EVEETLAISVALVILVVFLFL), 360–380 (LIPAVAVPVSLISTFAAMYLC), 387–407 (LSLMALTIATGFVVDDAIVVL), 431–451 (VGFTVISMSLSLVAVFLPLLL), 463–483 (FAVTLSVAIGISLVVSLTLTP), 528–548 (LVGVVFLGTIALNIWLYIAIP), 853–873 (LILIMAAIATVYIVLGILYES), 897–917 (LFNAPFSLIALIGIMLLIGIV), 953–973 (PIMMTTLAAMFGALPLVLSGG), and 984–1004 (ITIVGGLVMSQLLTLYTTPVV).

This sequence belongs to the resistance-nodulation-cell division (RND) (TC 2.A.6) family. MdtC subfamily. Part of a tripartite efflux system composed of MdtA, MdtB and MdtC. MdtC forms a heteromultimer with MdtB.

Its subcellular location is the cell inner membrane. This chain is Multidrug resistance protein MdtC, found in Salmonella arizonae (strain ATCC BAA-731 / CDC346-86 / RSK2980).